The following is a 144-amino-acid chain: Transcriptional regulator MraZ (144 aa).

SpoVT-AbrB domains lie at 5 to 47 and 76 to 121; these read EYQY…PLDR and AHKT…SQER.

This sequence belongs to the MraZ family. Forms oligomers.

It localises to the cytoplasm. Its subcellular location is the nucleoid. In Thermus thermophilus (strain ATCC BAA-163 / DSM 7039 / HB27), this protein is Transcriptional regulator MraZ.